A 221-amino-acid chain; its full sequence is Deoxyribose-phosphate aldolase (221 aa).

The active-site Proton donor/acceptor is aspartate 96. The active-site Schiff-base intermediate with acetaldehyde is the lysine 157. Lysine 185 serves as the catalytic Proton donor/acceptor.

It belongs to the DeoC/FbaB aldolase family. DeoC type 1 subfamily.

Its subcellular location is the cytoplasm. It catalyses the reaction 2-deoxy-D-ribose 5-phosphate = D-glyceraldehyde 3-phosphate + acetaldehyde. Its pathway is carbohydrate degradation; 2-deoxy-D-ribose 1-phosphate degradation; D-glyceraldehyde 3-phosphate and acetaldehyde from 2-deoxy-alpha-D-ribose 1-phosphate: step 2/2. Its function is as follows. Catalyzes a reversible aldol reaction between acetaldehyde and D-glyceraldehyde 3-phosphate to generate 2-deoxy-D-ribose 5-phosphate. The protein is Deoxyribose-phosphate aldolase of Crocosphaera subtropica (strain ATCC 51142 / BH68) (Cyanothece sp. (strain ATCC 51142)).